A 205-amino-acid chain; its full sequence is Small ribosomal subunit protein uS4 (205 aa).

Positions 94-157 (SRLDTVVYRM…KQIPLIQESV (64 aa)) constitute an S4 RNA-binding domain.

This sequence belongs to the universal ribosomal protein uS4 family. In terms of assembly, part of the 30S ribosomal subunit. Contacts protein S5. The interaction surface between S4 and S5 is involved in control of translational fidelity.

One of the primary rRNA binding proteins, it binds directly to 16S rRNA where it nucleates assembly of the body of the 30S subunit. In terms of biological role, with S5 and S12 plays an important role in translational accuracy. This chain is Small ribosomal subunit protein uS4, found in Rickettsia conorii (strain ATCC VR-613 / Malish 7).